Reading from the N-terminus, the 523-residue chain is GMP synthase [glutamine-hydrolyzing] (523 aa).

Residues 8 to 205 (KILILDFGSQ…VVNICGCETK (198 aa)) form the Glutamine amidotransferase type-1 domain. Cysteine 85 serves as the catalytic Nucleophile. Active-site residues include histidine 179 and glutamate 181. Residues 206–398 (WTAENIIEDA…LGLPAEMINR (193 aa)) enclose the GMPS ATP-PPase domain. ATP is bound at residue 233–239 (SGGVDSS).

Homodimer.

The catalysed reaction is XMP + L-glutamine + ATP + H2O = GMP + L-glutamate + AMP + diphosphate + 2 H(+). It functions in the pathway purine metabolism; GMP biosynthesis; GMP from XMP (L-Gln route): step 1/1. In terms of biological role, catalyzes the synthesis of GMP from XMP. This chain is GMP synthase [glutamine-hydrolyzing], found in Haemophilus influenzae (strain 86-028NP).